A 122-amino-acid chain; its full sequence is Large ribosomal subunit protein bL12 (122 aa).

Belongs to the bacterial ribosomal protein bL12 family. Homodimer. Part of the ribosomal stalk of the 50S ribosomal subunit. Forms a multimeric L10(L12)X complex, where L10 forms an elongated spine to which 2 to 4 L12 dimers bind in a sequential fashion. Binds GTP-bound translation factors.

Functionally, forms part of the ribosomal stalk which helps the ribosome interact with GTP-bound translation factors. Is thus essential for accurate translation. In Borrelia hermsii (strain HS1 / DAH), this protein is Large ribosomal subunit protein bL12.